The following is a 421-amino-acid chain: Glucose-1-phosphate adenylyltransferase (421 aa).

Residues Y108, G173, 188–189, and S206 each bind alpha-D-glucose 1-phosphate; that span reads EK.

The protein belongs to the bacterial/plant glucose-1-phosphate adenylyltransferase family. As to quaternary structure, homotetramer.

The enzyme catalyses alpha-D-glucose 1-phosphate + ATP + H(+) = ADP-alpha-D-glucose + diphosphate. It participates in glycan biosynthesis; glycogen biosynthesis. Its function is as follows. Involved in the biosynthesis of ADP-glucose, a building block required for the elongation reactions to produce glycogen. Catalyzes the reaction between ATP and alpha-D-glucose 1-phosphate (G1P) to produce pyrophosphate and ADP-Glc. This is Glucose-1-phosphate adenylyltransferase from Mesorhizobium japonicum (strain LMG 29417 / CECT 9101 / MAFF 303099) (Mesorhizobium loti (strain MAFF 303099)).